We begin with the raw amino-acid sequence, 398 residues long: Transposase for insertion sequence element ISRM5 (398 aa).

The protein belongs to the transposase mutator family.

Required for the transposition of the insertion element. The polypeptide is Transposase for insertion sequence element ISRM5 (Rhizobium meliloti (strain 1021) (Ensifer meliloti)).